Reading from the N-terminus, the 208-residue chain is Fibroblast growth factor 6 (208 aa).

Positions 1 to 37 (MALGQRLFITMSRGAGRVQGTLQALVFLGVLVGMVVP) are cleaved as a signal peptide. An N-linked (GlcNAc...) asparagine glycan is attached at asparagine 45. A disulfide bridge links cysteine 90 with cysteine 157.

It belongs to the heparin-binding growth factors family. Interacts with FGFR1, FGFR2 and FGFR4. Affinity between fibroblast growth factors (FGFs) and their receptors is increased by heparan sulfate glycosaminoglycans that function as coreceptors. As to expression, embryos, adult muscles and adult testis.

It localises to the secreted. It is found in the extracellular space. Functionally, plays an important role in the regulation of cell proliferation, cell differentiation, angiogenesis and myogenesis, and is required for normal muscle regeneration. This Mus musculus (Mouse) protein is Fibroblast growth factor 6 (Fgf6).